The sequence spans 529 residues: UDP-glucuronosyltransferase 2B18 (529 aa).

The N-terminal stretch at 1-21 is a signal peptide; sequence MSVKWTSVILLIQLSFYFSSG. Residues Asn67 and Asn68 are each glycosylated (N-linked (GlcNAc...) asparagine). The chain crosses the membrane as a helical span at residues 493–513; the sequence is VIGFLLACVATVIFIIMKCCL.

It belongs to the UDP-glycosyltransferase family. In terms of tissue distribution, expressed in liver, prostate, kidney, testis, adrenal, bile duct, bladder, colon, small intestine, cerebellum and pancreas.

The protein localises to the microsome membrane. It localises to the endoplasmic reticulum membrane. The enzyme catalyses glucuronate acceptor + UDP-alpha-D-glucuronate = acceptor beta-D-glucuronoside + UDP + H(+). In terms of biological role, UDPGT is of major importance in the conjugation and subsequent elimination of potentially toxic xenobiotics and endogenous compounds. This isozyme displays activity toward 3-hydroxyandrogens. It is principally active on C19 steroids having a hydroxyl group at position 3-alpha of the steroid molecule and also active on planar phenols and bile acids. The polypeptide is UDP-glucuronosyltransferase 2B18 (UGT2B18) (Macaca fascicularis (Crab-eating macaque)).